The primary structure comprises 332 residues: Flotillin-like protein FloA (332 aa).

Residues 9–29 (FILIGGGIIFVVLFFHYVPFF) form a helical membrane-spanning segment.

The protein belongs to the flotillin-like FloA family. As to quaternary structure, homooligomerizes.

It localises to the cell membrane. The protein localises to the membrane raft. In terms of biological role, found in functional membrane microdomains (FMM) that may be equivalent to eukaryotic membrane rafts. FMMs are highly dynamic and increase in number as cells age. Flotillins are thought to be important factors in membrane fluidity. The protein is Flotillin-like protein FloA of Phocaeicola vulgatus (strain ATCC 8482 / DSM 1447 / JCM 5826 / CCUG 4940 / NBRC 14291 / NCTC 11154) (Bacteroides vulgatus).